The sequence spans 124 residues: Small ribosomal subunit protein uS12 (124 aa).

Aspartate 89 carries the 3-methylthioaspartic acid modification. The interval 104–124 (TAGVENRKQSRSKYGAKRPKK) is disordered. A compositionally biased stretch (basic residues) spans 112–124 (QSRSKYGAKRPKK).

This sequence belongs to the universal ribosomal protein uS12 family. As to quaternary structure, part of the 30S ribosomal subunit. Contacts proteins S8 and S17. May interact with IF1 in the 30S initiation complex.

In terms of biological role, with S4 and S5 plays an important role in translational accuracy. Interacts with and stabilizes bases of the 16S rRNA that are involved in tRNA selection in the A site and with the mRNA backbone. Located at the interface of the 30S and 50S subunits, it traverses the body of the 30S subunit contacting proteins on the other side and probably holding the rRNA structure together. The combined cluster of proteins S8, S12 and S17 appears to hold together the shoulder and platform of the 30S subunit. The chain is Small ribosomal subunit protein uS12 from Pseudothermotoga lettingae (strain ATCC BAA-301 / DSM 14385 / NBRC 107922 / TMO) (Thermotoga lettingae).